Here is a 275-residue protein sequence, read N- to C-terminus: Light-independent protochlorophyllide reductase iron-sulfur ATP-binding protein (275 aa).

ATP is bound by residues 12 to 17 (GIGKST) and Lys-41. Ser-16 provides a ligand contact to Mg(2+). [4Fe-4S] cluster-binding residues include Cys-97 and Cys-131. ATP is bound at residue 182-183 (NR).

It belongs to the NifH/BchL/ChlL family. As to quaternary structure, homodimer. Protochlorophyllide reductase is composed of three subunits; BchL, BchN and BchB. [4Fe-4S] cluster serves as cofactor.

It catalyses the reaction chlorophyllide a + oxidized 2[4Fe-4S]-[ferredoxin] + 2 ADP + 2 phosphate = protochlorophyllide a + reduced 2[4Fe-4S]-[ferredoxin] + 2 ATP + 2 H2O. It functions in the pathway porphyrin-containing compound metabolism; bacteriochlorophyll biosynthesis (light-independent). Component of the dark-operative protochlorophyllide reductase (DPOR) that uses Mg-ATP and reduced ferredoxin to reduce ring D of protochlorophyllide (Pchlide) to form chlorophyllide a (Chlide). This reaction is light-independent. The L component serves as a unique electron donor to the NB-component of the complex, and binds Mg-ATP. The chain is Light-independent protochlorophyllide reductase iron-sulfur ATP-binding protein from Chlorobium limicola (strain DSM 245 / NBRC 103803 / 6330).